Consider the following 575-residue polypeptide: Sulfite reductase [NADPH] hemoprotein beta-component (575 aa).

4 residues coordinate [4Fe-4S] cluster: cysteine 439, cysteine 445, cysteine 484, and cysteine 488. Cysteine 488 serves as a coordination point for siroheme.

Belongs to the nitrite and sulfite reductase 4Fe-4S domain family. In terms of assembly, alpha(8)-beta(8). The alpha component is a flavoprotein, the beta component is a hemoprotein. Requires siroheme as cofactor. It depends on [4Fe-4S] cluster as a cofactor.

The catalysed reaction is hydrogen sulfide + 3 NADP(+) + 3 H2O = sulfite + 3 NADPH + 4 H(+). The protein operates within sulfur metabolism; hydrogen sulfide biosynthesis; hydrogen sulfide from sulfite (NADPH route): step 1/1. Component of the sulfite reductase complex that catalyzes the 6-electron reduction of sulfite to sulfide. This is one of several activities required for the biosynthesis of L-cysteine from sulfate. This is Sulfite reductase [NADPH] hemoprotein beta-component from Blochmanniella pennsylvanica (strain BPEN).